The following is a 561-amino-acid chain: (+)-alpha-pinene synthase TPS2FN (561 aa).

Positions 276, 313, 317, 455, and 458 each coordinate (2E)-geranyl diphosphate. Mg(2+) is bound by residues D313 and D317. Positions 313 to 317 (DDIYD) match the DDXXD motif motif. Residues D458, T462, and E466 each contribute to the Mg(2+) site.

Belongs to the terpene synthase family. Tpsb subfamily. The cofactor is Mg(2+). It depends on Mn(2+) as a cofactor. In terms of tissue distribution, expressed in glandular trichomes two to four weeks after flowering onset.

It catalyses the reaction (2E)-geranyl diphosphate = (1R,5R)-alpha-pinene + diphosphate. The catalysed reaction is (2E)-geranyl diphosphate = (4S)-limonene + diphosphate. The enzyme catalyses (2E)-geranyl diphosphate = sabinene + diphosphate. It carries out the reaction (2E)-geranyl diphosphate = beta-phellandrene + diphosphate. It catalyses the reaction (2E)-geranyl diphosphate = camphene + diphosphate. The catalysed reaction is (2E)-geranyl diphosphate = isoterpinolene + diphosphate. It participates in secondary metabolite biosynthesis; terpenoid biosynthesis. It functions in the pathway terpene metabolism; (-)-alpha-pinene biosynthesis; (-)-alpha-pinene from geranyl diphosphate: step 1/1. Its function is as follows. Involved in monoterpene (C10) olefins biosynthesis, constituants of cannabinoids and terpenoids-rich resins. Catalyzes mainly the conversion of (2E)-geranyl diphosphate to (+)-alpha-pinene, and also produces minor products such as camphene, sabinene, beta-phellandrene, (-)-limonene and isoterpinolene. The chain is (+)-alpha-pinene synthase TPS2FN from Cannabis sativa (Hemp).